A 421-amino-acid polypeptide reads, in one-letter code: Gamma-glutamyl phosphate reductase (421 aa).

This sequence belongs to the gamma-glutamyl phosphate reductase family.

It localises to the cytoplasm. It carries out the reaction L-glutamate 5-semialdehyde + phosphate + NADP(+) = L-glutamyl 5-phosphate + NADPH + H(+). Its pathway is amino-acid biosynthesis; L-proline biosynthesis; L-glutamate 5-semialdehyde from L-glutamate: step 2/2. Functionally, catalyzes the NADPH-dependent reduction of L-glutamate 5-phosphate into L-glutamate 5-semialdehyde and phosphate. The product spontaneously undergoes cyclization to form 1-pyrroline-5-carboxylate. The sequence is that of Gamma-glutamyl phosphate reductase from Pseudomonas fluorescens (strain ATCC BAA-477 / NRRL B-23932 / Pf-5).